The primary structure comprises 151 residues: MRREKKSRAYRGSRTHGWGRVGQHRKSGSRGGRGLVGYHKHKWSWTVKYAPDWYGKHGFTRHPSLVVEYRTINVGQLDAEVEEFFRKGLASREGDAYVVDLTQLGFNKLTGSGQVRNKIIVKVPVATKRAISKIEAQGGRVEVAKTQEAGE.

Residues Met1–Arg14 are compositionally biased toward basic residues. The tract at residues Met1 to Arg33 is disordered.

It belongs to the universal ribosomal protein uL15 family. As to quaternary structure, part of the 50S ribosomal subunit.

Binds to the 23S rRNA. The polypeptide is Large ribosomal subunit protein uL15 (Thermofilum pendens (strain DSM 2475 / Hrk 5)).